The primary structure comprises 181 residues: Trafficking protein particle complex subunit 3-like protein (181 aa).

A lipid anchor (S-palmitoyl cysteine) is attached at cysteine 68.

This sequence belongs to the TRAPP small subunits family. BET3 subfamily. Homodimer. Component of the multisubunit TRAPP (transport protein particle) complex, which includes at least TRAPPC2, TRAPPC2L, TRAPPC3, TRAPPC3L, TRAPPC4, TRAPPC5, TRAPPC8, TRAPPC9, TRAPPC10, TRAPPC11 and TRAPPC12.

The protein resides in the golgi apparatus. It is found in the cis-Golgi network. It localises to the endoplasmic reticulum. In terms of biological role, may play a role in vesicular transport from endoplasmic reticulum to Golgi. The polypeptide is Trafficking protein particle complex subunit 3-like protein (TRAPPC3L) (Homo sapiens (Human)).